Reading from the N-terminus, the 277-residue chain is MDFQHWLHEAVNQLRDSDSPRRDAEILLEYVTGKGRTYIMAFGETPLTDVQQQQLADLLQRRKQGEPIAYLTGLREFWSLPLFVSPATLIPRPDTECLVEQALARLPVKTCRILDLGTGTGAIALALACERPDCEVTAVDRMPDAVALAIRNAEHLAIRNVRILQSCWFSALSGQQFDMIVSNPPYIDAQDPHLSEGDVRFEPRSALVADENGMADLTHIIDNARQMLTPGGFLLLEHGWQQGEAVRAVFRRSGYSDVETCRDYGGNERVTCGRFTP.

S-adenosyl-L-methionine is bound by residues 117 to 121, Asp-140, Trp-168, and Asn-183; that span reads GTGTG. 183–186 serves as a coordination point for substrate; that stretch reads NPPY.

The protein belongs to the protein N5-glutamine methyltransferase family. PrmC subfamily.

The enzyme catalyses L-glutaminyl-[peptide chain release factor] + S-adenosyl-L-methionine = N(5)-methyl-L-glutaminyl-[peptide chain release factor] + S-adenosyl-L-homocysteine + H(+). Functionally, methylates the class 1 translation termination release factors RF1/PrfA and RF2/PrfB on the glutamine residue of the universally conserved GGQ motif. This chain is Release factor glutamine methyltransferase, found in Salmonella typhimurium (strain LT2 / SGSC1412 / ATCC 700720).